A 438-amino-acid polypeptide reads, in one-letter code: ATP-dependent protease ATPase subunit HslU (438 aa).

ATP is bound by residues I18, 60-65 (GVGKTE), D251, E316, and R388.

It belongs to the ClpX chaperone family. HslU subfamily. As to quaternary structure, a double ring-shaped homohexamer of HslV is capped on each side by a ring-shaped HslU homohexamer. The assembly of the HslU/HslV complex is dependent on binding of ATP.

It is found in the cytoplasm. Functionally, ATPase subunit of a proteasome-like degradation complex; this subunit has chaperone activity. The binding of ATP and its subsequent hydrolysis by HslU are essential for unfolding of protein substrates subsequently hydrolyzed by HslV. HslU recognizes the N-terminal part of its protein substrates and unfolds these before they are guided to HslV for hydrolysis. In Jannaschia sp. (strain CCS1), this protein is ATP-dependent protease ATPase subunit HslU.